A 327-amino-acid chain; its full sequence is Ferredoxin--NADP reductase (327 aa).

FAD-binding residues include threonine 18, aspartate 37, glutamine 45, tyrosine 50, alanine 90, phenylalanine 124, aspartate 283, and serine 324.

The protein belongs to the ferredoxin--NADP reductase type 2 family. In terms of assembly, homodimer. FAD is required as a cofactor.

It carries out the reaction 2 reduced [2Fe-2S]-[ferredoxin] + NADP(+) + H(+) = 2 oxidized [2Fe-2S]-[ferredoxin] + NADPH. In Saccharopolyspora erythraea (strain ATCC 11635 / DSM 40517 / JCM 4748 / NBRC 13426 / NCIMB 8594 / NRRL 2338), this protein is Ferredoxin--NADP reductase.